Here is a 134-residue protein sequence, read N- to C-terminus: Large ribosomal subunit protein eL32 (134 aa).

Belongs to the eukaryotic ribosomal protein eL32 family.

The protein is Large ribosomal subunit protein eL32 (RpL32) of Spodoptera frugiperda (Fall armyworm).